We begin with the raw amino-acid sequence, 1025 residues long: Error-prone DNA polymerase (1025 aa).

This sequence belongs to the DNA polymerase type-C family. DnaE2 subfamily.

Its subcellular location is the cytoplasm. The catalysed reaction is DNA(n) + a 2'-deoxyribonucleoside 5'-triphosphate = DNA(n+1) + diphosphate. Its function is as follows. DNA polymerase involved in damage-induced mutagenesis and translesion synthesis (TLS). It is not the major replicative DNA polymerase. The sequence is that of Error-prone DNA polymerase from Pseudomonas fluorescens (strain Pf0-1).